A 149-amino-acid chain; its full sequence is Nucleoside diphosphate kinase (149 aa).

ATP-binding residues include lysine 9, phenylalanine 57, arginine 85, threonine 91, arginine 102, and asparagine 112. The active-site Pros-phosphohistidine intermediate is the histidine 115.

It belongs to the NDK family. In terms of assembly, homotetramer. Requires Mg(2+) as cofactor.

Its subcellular location is the cytoplasm. It catalyses the reaction a 2'-deoxyribonucleoside 5'-diphosphate + ATP = a 2'-deoxyribonucleoside 5'-triphosphate + ADP. The enzyme catalyses a ribonucleoside 5'-diphosphate + ATP = a ribonucleoside 5'-triphosphate + ADP. In terms of biological role, major role in the synthesis of nucleoside triphosphates other than ATP. The ATP gamma phosphate is transferred to the NDP beta phosphate via a ping-pong mechanism, using a phosphorylated active-site intermediate. This Thermomicrobium roseum (strain ATCC 27502 / DSM 5159 / P-2) protein is Nucleoside diphosphate kinase.